The primary structure comprises 489 residues: MAPAVFTSDYWKKYFSNKKKPTVKNTSDIDLLHINRGRQPFDEGLSINEDSFFYRHNIHVPRIVYLIIVACGSFIITGGIEFAIAYGMYKKTETSVRLWRLPDTLSGDAAVTNFVQAIVTYWVESILVQGDLRSGLVKPIYFGWWPENFLLREVLRAKPRYHFKFIVFRWMEWLVFVGLRGLVWSVPLWFLFWPATVGILCAPGRHEGNDYYFNNYPAPQVFKLIFGGGEGFVLTPWIAFLHMYMYGHYLHVAKNQKSLPKTSDLEQQRGTSSSQPSENDANITALPKPEPKMYENSDLTPARTPVTPAPLEKPVNLAPEVVEPTNAAASPLQLNAPKLTDVDDSALAYDPTKVQDGEDRFVHNDVPLENAENPSRFVHSDAPIDMTHTTTVISEAQNLPSTLLPQDGNAVHHDTDAPSLSNVRKSVDSPRVPPSFSDDAVSSFSLVTAPSINNVGGSTAPSVNNQEREYDYDDTSSRSSTLTERPVVH.

Thr-26 is subject to Phosphothreonine. Ser-27 carries the phosphoserine modification. The next 3 membrane-spanning stretches (helical) occupy residues 63–83 (IVYL…IEFA), 182–202 (LVWS…ILCA), and 221–241 (VFKL…IAFL). Disordered regions lie at residues 260 to 312 (PKTS…APLE), 401 to 435 (STLL…VPPS), and 450 to 489 (PSIN…PVVH). Phosphoserine is present on Ser-263. The span at 268 to 282 (QRGTSSSQPSENDAN) shows a compositional bias: polar residues. Residues 450 to 465 (PSINNVGGSTAPSVNN) are compositionally biased toward polar residues. Low complexity predominate over residues 477–489 (SRSSTLTERPVVH).

It is found in the endoplasmic reticulum membrane. This is an uncharacterized protein from Schizosaccharomyces pombe (strain 972 / ATCC 24843) (Fission yeast).